The primary structure comprises 333 residues: Adenosine deaminase (333 aa).

Residues His-12 and His-14 each coordinate Zn(2+). Positions 14, 16, and 170 each coordinate substrate. Residue His-197 coordinates Zn(2+). Glu-200 functions as the Proton donor in the catalytic mechanism. Asp-278 provides a ligand contact to Zn(2+). Asp-279 lines the substrate pocket.

The protein belongs to the metallo-dependent hydrolases superfamily. Adenosine and AMP deaminases family. Adenosine deaminase subfamily. The cofactor is Zn(2+).

The enzyme catalyses adenosine + H2O + H(+) = inosine + NH4(+). It carries out the reaction 2'-deoxyadenosine + H2O + H(+) = 2'-deoxyinosine + NH4(+). In terms of biological role, catalyzes the hydrolytic deamination of adenosine and 2-deoxyadenosine. In Klebsiella pneumoniae subsp. pneumoniae (strain ATCC 700721 / MGH 78578), this protein is Adenosine deaminase.